Here is a 251-residue protein sequence, read N- to C-terminus: Hydroxyacylglutathione hydrolase (251 aa).

Zn(2+)-binding residues include histidine 53, histidine 55, aspartate 57, histidine 58, histidine 110, aspartate 127, and histidine 165.

The protein belongs to the metallo-beta-lactamase superfamily. Glyoxalase II family. As to quaternary structure, monomer. Zn(2+) serves as cofactor.

It carries out the reaction an S-(2-hydroxyacyl)glutathione + H2O = a 2-hydroxy carboxylate + glutathione + H(+). The protein operates within secondary metabolite metabolism; methylglyoxal degradation; (R)-lactate from methylglyoxal: step 2/2. Its function is as follows. Thiolesterase that catalyzes the hydrolysis of S-D-lactoyl-glutathione to form glutathione and D-lactic acid. This is Hydroxyacylglutathione hydrolase from Yersinia enterocolitica serotype O:8 / biotype 1B (strain NCTC 13174 / 8081).